The chain runs to 645 residues: Threonine--tRNA ligase (645 aa).

The TGS domain maps to 1-63; sequence MEQINIQFPD…ETDGSIEIVT (63 aa). The segment at 242-540 is catalytic; the sequence is DHRKIGKELE…LTEETKGAFP (299 aa). Positions 336, 387, and 517 each coordinate Zn(2+).

It belongs to the class-II aminoacyl-tRNA synthetase family. Homodimer. Requires Zn(2+) as cofactor.

Its subcellular location is the cytoplasm. The enzyme catalyses tRNA(Thr) + L-threonine + ATP = L-threonyl-tRNA(Thr) + AMP + diphosphate + H(+). In terms of biological role, catalyzes the attachment of threonine to tRNA(Thr) in a two-step reaction: L-threonine is first activated by ATP to form Thr-AMP and then transferred to the acceptor end of tRNA(Thr). Also edits incorrectly charged L-seryl-tRNA(Thr). The protein is Threonine--tRNA ligase of Staphylococcus aureus (strain NCTC 8325 / PS 47).